Reading from the N-terminus, the 316-residue chain is 4-hydroxy-3-methylbut-2-enyl diphosphate reductase (316 aa).

Residue C12 participates in [4Fe-4S] cluster binding. (2E)-4-hydroxy-3-methylbut-2-enyl diphosphate contacts are provided by H41 and H74. Residues H41 and H74 each contribute to the dimethylallyl diphosphate site. The isopentenyl diphosphate site is built by H41 and H74. A [4Fe-4S] cluster-binding site is contributed by C96. H124 provides a ligand contact to (2E)-4-hydroxy-3-methylbut-2-enyl diphosphate. H124 provides a ligand contact to dimethylallyl diphosphate. Residue H124 coordinates isopentenyl diphosphate. E126 acts as the Proton donor in catalysis. T169 serves as a coordination point for (2E)-4-hydroxy-3-methylbut-2-enyl diphosphate. C199 lines the [4Fe-4S] cluster pocket. (2E)-4-hydroxy-3-methylbut-2-enyl diphosphate-binding residues include S227, S228, N229, and S271. Dimethylallyl diphosphate contacts are provided by S227, S228, N229, and S271. Isopentenyl diphosphate-binding residues include S227, S228, N229, and S271.

The protein belongs to the IspH family. [4Fe-4S] cluster is required as a cofactor.

It catalyses the reaction isopentenyl diphosphate + 2 oxidized [2Fe-2S]-[ferredoxin] + H2O = (2E)-4-hydroxy-3-methylbut-2-enyl diphosphate + 2 reduced [2Fe-2S]-[ferredoxin] + 2 H(+). It carries out the reaction dimethylallyl diphosphate + 2 oxidized [2Fe-2S]-[ferredoxin] + H2O = (2E)-4-hydroxy-3-methylbut-2-enyl diphosphate + 2 reduced [2Fe-2S]-[ferredoxin] + 2 H(+). It participates in isoprenoid biosynthesis; dimethylallyl diphosphate biosynthesis; dimethylallyl diphosphate from (2E)-4-hydroxy-3-methylbutenyl diphosphate: step 1/1. Its pathway is isoprenoid biosynthesis; isopentenyl diphosphate biosynthesis via DXP pathway; isopentenyl diphosphate from 1-deoxy-D-xylulose 5-phosphate: step 6/6. Catalyzes the conversion of 1-hydroxy-2-methyl-2-(E)-butenyl 4-diphosphate (HMBPP) into a mixture of isopentenyl diphosphate (IPP) and dimethylallyl diphosphate (DMAPP). Acts in the terminal step of the DOXP/MEP pathway for isoprenoid precursor biosynthesis. The protein is 4-hydroxy-3-methylbut-2-enyl diphosphate reductase of Xanthomonas campestris pv. campestris (strain 8004).